The sequence spans 67 residues: Small ribosomal subunit protein eS27 (67 aa).

Residues Cys-22, Cys-25, Cys-41, and Cys-44 each coordinate Zn(2+). A C4-type zinc finger spans residues 22–44 (CPDCGNEQITFSHAAMVVRCLVC).

It belongs to the eukaryotic ribosomal protein eS27 family. As to quaternary structure, part of the 30S ribosomal subunit. The cofactor is Zn(2+).

The sequence is that of Small ribosomal subunit protein eS27 from Pyrobaculum aerophilum (strain ATCC 51768 / DSM 7523 / JCM 9630 / CIP 104966 / NBRC 100827 / IM2).